A 278-amino-acid chain; its full sequence is Pantothenate synthetase (278 aa).

27 to 34 is a binding site for ATP; that stretch reads MGNLHEGH. The active-site Proton donor is His34. Gln58 is a binding site for (R)-pantoate. Gln58 provides a ligand contact to beta-alanine. 147–150 serves as a coordination point for ATP; sequence GEKD. Gln153 contributes to the (R)-pantoate binding site. 184-187 contacts ATP; it reads YSSR.

It belongs to the pantothenate synthetase family. In terms of assembly, homodimer.

The protein localises to the cytoplasm. The catalysed reaction is (R)-pantoate + beta-alanine + ATP = (R)-pantothenate + AMP + diphosphate + H(+). It participates in cofactor biosynthesis; (R)-pantothenate biosynthesis; (R)-pantothenate from (R)-pantoate and beta-alanine: step 1/1. Its function is as follows. Catalyzes the condensation of pantoate with beta-alanine in an ATP-dependent reaction via a pantoyl-adenylate intermediate. The protein is Pantothenate synthetase of Acidithiobacillus ferrooxidans (strain ATCC 23270 / DSM 14882 / CIP 104768 / NCIMB 8455) (Ferrobacillus ferrooxidans (strain ATCC 23270)).